Reading from the N-terminus, the 304-residue chain is Glycine--tRNA ligase alpha subunit (304 aa).

The protein belongs to the class-II aminoacyl-tRNA synthetase family. In terms of assembly, tetramer of two alpha and two beta subunits.

The protein localises to the cytoplasm. The catalysed reaction is tRNA(Gly) + glycine + ATP = glycyl-tRNA(Gly) + AMP + diphosphate. This is Glycine--tRNA ligase alpha subunit from Pectobacterium carotovorum subsp. carotovorum (strain PC1).